A 456-amino-acid chain; its full sequence is Signal recognition particle receptor FtsY (456 aa).

A compositionally biased stretch (basic and acidic residues) spans 1-26 (MFDGLKKKLNRFRNDVEETAEEKAEA). A disordered region spans residues 1-163 (MFDGLKKKLN…DEDDSSGPGR (163 aa)). The span at 27-39 (AADEAESDADAEA) shows a compositional bias: acidic residues. A compositionally biased stretch (low complexity) spans 40-62 (ESAPADTDNAAVEPEASEPAAAD). Over residues 63 to 81 (PDADAVGDADAGSEADAVD) the composition is skewed to acidic residues. The span at 82–97 (AADAPADAESSSAAVE) shows a compositional bias: low complexity. The span at 112–134 (PDSEVDAGADTGDEPSGEPTADE) shows a compositional bias: acidic residues. Residues 265–272 (GINGVGKT), 347–351 (DTAGR), and 405–408 (TKAD) each bind GTP.

Belongs to the GTP-binding SRP family. FtsY subfamily. Part of the signal recognition particle protein translocation system, which is composed of SRP and FtsY.

It localises to the cell membrane. It is found in the cytoplasm. The catalysed reaction is GTP + H2O = GDP + phosphate + H(+). Its function is as follows. Involved in targeting and insertion of nascent membrane proteins into the cytoplasmic membrane. Acts as a receptor for the complex formed by the signal recognition particle (SRP) and the ribosome-nascent chain (RNC). This is Signal recognition particle receptor FtsY from Haloferax volcanii (strain ATCC 29605 / DSM 3757 / JCM 8879 / NBRC 14742 / NCIMB 2012 / VKM B-1768 / DS2) (Halobacterium volcanii).